Reading from the N-terminus, the 508-residue chain is Probable cytosol aminopeptidase (508 aa).

Mn(2+) contacts are provided by Lys-274 and Asp-279. Residue Lys-286 is part of the active site. Residues Asp-297, Asp-356, and Glu-358 each coordinate Mn(2+). The active site involves Arg-360.

This sequence belongs to the peptidase M17 family. Requires Mn(2+) as cofactor.

The protein resides in the cytoplasm. It catalyses the reaction Release of an N-terminal amino acid, Xaa-|-Yaa-, in which Xaa is preferably Leu, but may be other amino acids including Pro although not Arg or Lys, and Yaa may be Pro. Amino acid amides and methyl esters are also readily hydrolyzed, but rates on arylamides are exceedingly low.. It carries out the reaction Release of an N-terminal amino acid, preferentially leucine, but not glutamic or aspartic acids.. In terms of biological role, presumably involved in the processing and regular turnover of intracellular proteins. Catalyzes the removal of unsubstituted N-terminal amino acids from various peptides. In Cutibacterium acnes (strain DSM 16379 / KPA171202) (Propionibacterium acnes), this protein is Probable cytosol aminopeptidase.